The following is a 919-amino-acid chain: Isoleucine--tRNA ligase (919 aa).

A 'HIGH' region motif is present at residues 57–67; the sequence is PYANGHTHIGH. L-isoleucyl-5'-AMP is bound at residue E569. A 'KMSKS' region motif is present at residues 610–614; it reads KMSKS. K613 provides a ligand contact to ATP. C895, C898, C910, and C913 together coordinate Zn(2+).

The protein belongs to the class-I aminoacyl-tRNA synthetase family. IleS type 1 subfamily. As to quaternary structure, monomer. Zn(2+) is required as a cofactor.

The protein localises to the cytoplasm. The catalysed reaction is tRNA(Ile) + L-isoleucine + ATP = L-isoleucyl-tRNA(Ile) + AMP + diphosphate. Functionally, catalyzes the attachment of isoleucine to tRNA(Ile). As IleRS can inadvertently accommodate and process structurally similar amino acids such as valine, to avoid such errors it has two additional distinct tRNA(Ile)-dependent editing activities. One activity is designated as 'pretransfer' editing and involves the hydrolysis of activated Val-AMP. The other activity is designated 'posttransfer' editing and involves deacylation of mischarged Val-tRNA(Ile). In Sulfurimonas denitrificans (strain ATCC 33889 / DSM 1251) (Thiomicrospira denitrificans (strain ATCC 33889 / DSM 1251)), this protein is Isoleucine--tRNA ligase.